The sequence spans 92 residues: Small ribosomal subunit protein uS19c (92 aa).

The protein belongs to the universal ribosomal protein uS19 family.

It localises to the plastid. It is found in the chloroplast. Functionally, protein S19 forms a complex with S13 that binds strongly to the 16S ribosomal RNA. The sequence is that of Small ribosomal subunit protein uS19c from Cicer arietinum (Chickpea).